Here is a 747-residue protein sequence, read N- to C-terminus: Protein neuralized (747 aa).

Positions 97-251 constitute an NHR 1 domain; that stretch reads PLQFHTVHGD…NCTGIEFLDA (155 aa). Residues 280 to 292 are compositionally biased toward low complexity; the sequence is LPQQQQQLPQQQL. The tract at residues 280–309 is disordered; it reads LPQQQQQLPQQQLTAHHPLQQSRRSLPGGT. In terms of domain architecture, NHR 2 spans 359–514; sequence PVPFHITKGR…STQSLRMFRQ (156 aa). The RING-type zinc-finger motif lies at 694–735; that stretch reads CTICYENPIDSVLYMCGHMCMCYDCAIEQWRGVGGGQCPLCR.

The protein localises to the nucleus. Involved in neurogenesis. Interacts with other neurogenic proteins in the specification of the neuroblast versus epidermoblast cell fate. The sequence is that of Protein neuralized (neur) from Drosophila virilis (Fruit fly).